The chain runs to 283 residues: Diaminopimelate epimerase (283 aa).

2 residues coordinate substrate: N13 and N67. C76 serves as the catalytic Proton donor. Residues 77 to 78 (GN), N166, N199, and 217 to 218 (ER) contribute to the substrate site. C226 acts as the Proton acceptor in catalysis. 227–228 (GT) contributes to the substrate binding site.

The protein belongs to the diaminopimelate epimerase family. As to quaternary structure, homodimer.

The protein localises to the cytoplasm. The enzyme catalyses (2S,6S)-2,6-diaminopimelate = meso-2,6-diaminopimelate. It functions in the pathway amino-acid biosynthesis; L-lysine biosynthesis via DAP pathway; DL-2,6-diaminopimelate from LL-2,6-diaminopimelate: step 1/1. In terms of biological role, catalyzes the stereoinversion of LL-2,6-diaminopimelate (L,L-DAP) to meso-diaminopimelate (meso-DAP), a precursor of L-lysine and an essential component of the bacterial peptidoglycan. This chain is Diaminopimelate epimerase, found in Desulforapulum autotrophicum (strain ATCC 43914 / DSM 3382 / VKM B-1955 / HRM2) (Desulfobacterium autotrophicum).